The sequence spans 207 residues: Cytochrome c biogenesis ATP-binding export protein CcmA (207 aa).

Residues 4-207 (LEVRELLCER…RISLTQTRAV (204 aa)) enclose the ABC transporter domain. 36-43 (GSNGAGKT) provides a ligand contact to ATP.

This sequence belongs to the ABC transporter superfamily. CcmA exporter (TC 3.A.1.107) family. The complex is composed of two ATP-binding proteins (CcmA) and two transmembrane proteins (CcmB).

The protein resides in the cell inner membrane. The catalysed reaction is heme b(in) + ATP + H2O = heme b(out) + ADP + phosphate + H(+). Part of the ABC transporter complex CcmAB involved in the biogenesis of c-type cytochromes; once thought to export heme, this seems not to be the case, but its exact role is uncertain. Responsible for energy coupling to the transport system. In Escherichia coli O157:H7, this protein is Cytochrome c biogenesis ATP-binding export protein CcmA.